Consider the following 616-residue polypeptide: Leucine aminopeptidase (616 aa).

Substrate-binding positions include 128 to 130 (QCQ) and 282 to 286 (GGMEN). H309 lines the Zn(2+) pocket. E310 acts as the Proton acceptor in catalysis. Zn(2+) contacts are provided by H313 and E332. The active-site Proton donor is Y397. Residue 566 to 568 (RMK) coordinates substrate.

It belongs to the peptidase M1 family. The cofactor is Zn(2+).

It is found in the cytoplasm. The catalysed reaction is an epoxide + H2O = an ethanediol. Its function is as follows. Aminopeptidase that preferentially cleaves di- and tripeptides. Also has low epoxide hydrolase activity (in vitro). Can hydrolyze the epoxide leukotriene LTA(4) but it forms preferentially 5,6-dihydroxy-7,9,11,14-eicosatetraenoic acid rather than the cytokine leukotriene B(4) as the product compared to the homologous mammalian enzyme (in vitro). The protein is Leucine aminopeptidase (LKHA4) of Arabidopsis thaliana (Mouse-ear cress).